The chain runs to 357 residues: Isopentenyl-diphosphate delta-isomerase (357 aa).

A substrate-binding site is contributed by 12-13 (RK). Residues serine 70, 71–73 (SMT), serine 101, and asparagine 130 each bind FMN. Position 101–103 (101–103 (SMR)) interacts with substrate. Glutamine 165 serves as a coordination point for substrate. Mg(2+) is bound at residue glutamate 166. FMN-binding positions include lysine 197 and 310–311 (AR).

This sequence belongs to the IPP isomerase type 2 family. In terms of assembly, homooctamer. Dimer of tetramers. The cofactor is FMN. NADPH serves as cofactor. Mg(2+) is required as a cofactor.

The protein localises to the cytoplasm. It catalyses the reaction isopentenyl diphosphate = dimethylallyl diphosphate. Involved in the biosynthesis of isoprenoids. Catalyzes the 1,3-allylic rearrangement of the homoallylic substrate isopentenyl (IPP) to its allylic isomer, dimethylallyl diphosphate (DMAPP). The sequence is that of Isopentenyl-diphosphate delta-isomerase from Pelodictyon phaeoclathratiforme (strain DSM 5477 / BU-1).